Consider the following 205-residue polypeptide: Guanylate kinase (205 aa).

Residues 7 to 185 (GNIFIISAAS…AEEDLRHIVN (179 aa)) enclose the Guanylate kinase-like domain. ATP is bound at residue 14–21 (AASGTGKT).

The protein belongs to the guanylate kinase family.

The protein localises to the cytoplasm. The catalysed reaction is GMP + ATP = GDP + ADP. In terms of biological role, essential for recycling GMP and indirectly, cGMP. The sequence is that of Guanylate kinase (gmk) from Neisseria meningitidis serogroup B (strain ATCC BAA-335 / MC58).